The primary structure comprises 591 residues: Chaperone protein DnaK (591 aa).

A Phosphothreonine; by autocatalysis modification is found at T175. Low complexity predominate over residues 568-577 (AQAAEFANKQ). A disordered region spans residues 568–591 (AQAAEFANKQNESDPNNNSSEQNN). Residues 580–591 (SDPNNNSSEQNN) are compositionally biased toward polar residues.

This sequence belongs to the heat shock protein 70 family.

Acts as a chaperone. This chain is Chaperone protein DnaK, found in Mycoplasma mycoides subsp. mycoides SC (strain CCUG 32753 / NCTC 10114 / PG1).